Consider the following 293-residue polypeptide: Putative ribose uptake protein RbsU (293 aa).

Helical transmembrane passes span 5–24, 34–51, 58–80, 95–114, 121–138, 153–170, 177–199, 212–234, 241–263, and 273–292; these read AILI…TIAS, IFGA…LALF, GGMA…IITF, TTAF…LGNW, IIGF…RMTV, SAVI…IYSA, IGGF…IYAL, VSWQ…LISA, LATG…IFFL, and MITI…TVFI.

The protein belongs to the GRP transporter (TC 2.A.7.5) family.

Its subcellular location is the cell membrane. In terms of biological role, could be involved in the uptake of ribose. In Staphylococcus epidermidis (strain ATCC 35984 / DSM 28319 / BCRC 17069 / CCUG 31568 / BM 3577 / RP62A), this protein is Putative ribose uptake protein RbsU (rbsU).